A 288-amino-acid chain; its full sequence is Bis(5'-nucleosyl)-tetraphosphatase, symmetrical (288 aa).

Belongs to the Ap4A hydrolase family.

It carries out the reaction P(1),P(4)-bis(5'-adenosyl) tetraphosphate + H2O = 2 ADP + 2 H(+). Its function is as follows. Hydrolyzes diadenosine 5',5'''-P1,P4-tetraphosphate to yield ADP. In Pseudomonas putida (strain ATCC 700007 / DSM 6899 / JCM 31910 / BCRC 17059 / LMG 24140 / F1), this protein is Bis(5'-nucleosyl)-tetraphosphatase, symmetrical.